Consider the following 637-residue polypeptide: Chaperone protein HtpG (637 aa).

The tract at residues 1 to 330 (MATAPASHAF…TEDLPLNISR (330 aa)) is a; substrate-binding. A b region spans residues 331 to 551 (ETLQENVVVR…GGASTSSMDR (221 aa)). The c stretch occupies residues 552–637 (LLRVLHKDES…GDWYKAVRGL (86 aa)).

Belongs to the heat shock protein 90 family. As to quaternary structure, homodimer.

It is found in the cytoplasm. Its function is as follows. Molecular chaperone. Has ATPase activity. The protein is Chaperone protein HtpG of Nitratidesulfovibrio vulgaris (strain ATCC 29579 / DSM 644 / CCUG 34227 / NCIMB 8303 / VKM B-1760 / Hildenborough) (Desulfovibrio vulgaris).